A 951-amino-acid polypeptide reads, in one-letter code: Protocadherin-20 (951 aa).

The signal sequence occupies residues 1-60 (MRGRGNARSSQALGVSWCPATWHPRLDMGRLHRPRSSTSYRNLPHLFLFFLFVGPFSCLG). Residues 61-890 (SYSRATELLY…VESVSCMPTL (830 aa)) lie on the Extracellular side of the membrane. Cadherin domains follow at residues 64–209 (RATE…APQF), 210–320 (PVSQ…CPLF), 321–535 (TDSQ…APIF), 536–639 (LQPL…SPRF), 640–742 (INKD…PPLV), and 746–863 (QSNM…EPEI). An N-linked (GlcNAc...) asparagine glycan is attached at Asn-135. Residues Asn-326 and Asn-332 are each glycosylated (N-linked (GlcNAc...) asparagine). 5 N-linked (GlcNAc...) asparagine glycosylation sites follow: Asn-680, Asn-748, Asn-803, Asn-844, and Asn-849. Residues 891-911 (VALSVISLGSITLVTGMGIYI) traverse the membrane as a helical segment. Topologically, residues 912–951 (CLRKGEKHPREDENLEVQIPLKGKIDLHMRERKPMDISNI) are cytoplasmic.

The protein resides in the cell membrane. Functionally, potential calcium-dependent cell-adhesion protein. In Homo sapiens (Human), this protein is Protocadherin-20 (PCDH20).